The chain runs to 344 residues: Golgi-associated RAB2 interactor protein 1B (344 aa).

Residues 271–293 form a disordered region; that stretch reads FRSSRKVETNKNSSGKDSSREDS.

The protein belongs to the GARIN family.

It is found in the golgi apparatus. Functionally, RAB2B effector protein required for accurate acrosome formation and normal male fertility. In complex with RAB2A/RAB2B, seems to suppress excessive vesicle trafficking during acrosome formation. The protein is Golgi-associated RAB2 interactor protein 1B of Homo sapiens (Human).